A 95-amino-acid chain; its full sequence is Putative pterin-4-alpha-carbinolamine dehydratase (95 aa).

The protein belongs to the pterin-4-alpha-carbinolamine dehydratase family.

The catalysed reaction is (4aS,6R)-4a-hydroxy-L-erythro-5,6,7,8-tetrahydrobiopterin = (6R)-L-erythro-6,7-dihydrobiopterin + H2O. The polypeptide is Putative pterin-4-alpha-carbinolamine dehydratase (Nocardia farcinica (strain IFM 10152)).